An 869-amino-acid chain; its full sequence is MASFIWVQLKKTSEVDLAKPLVKFIQQTYPSGGEEQAQYCRAAEELSKLRRSALGRPLDKHEGALETLLRYYDQICSIEPKFPFSENQICLTFTWKDAFDKGSLFGGSVKLALASLGYEKSCVLFNCAALASQIAAEQNLDNDEGLKTAAKQYQFASGAFLHIKDTVLSALSREPTVDISPDTVGTLSLIMLAQAQEVFFLKATRDKMKDAIIAKLANQAADYFGDAFKQCQYKDTLPKEVFPTLAAKQCIMQANAEYHQSILAKQQKKFGEEIARLQHAAELIKNVASRYDEYVNVKDFSDKINRALTAAKKDNDFIYHDRVPDLKDLDPIGKATLVKPTPVNVPVSQKFTDLFEKMVPVSVQQSLAVFSQRKADLVNRSIAQMREATTLANGVLASLNLPAAIEDVSGDTVPQSILTKSTSVVEQGGIQTVDQLIKELPELLQRNREILEESLRLLDEEEATDNDLRAKFKDRWQRTPSNDLYKPLRAEGAKFRAVLDKAVQADGQVKERYQSHRDTIALLCKPEPELNAAIPSANPAKTMQGSEVVSVLKSLLSNLDEIKKERESLENDLKSVNFDMTSKFLTALAQDGVINEEALSVTELDRIYGGLTSKVQESLKKQEGLLKNIQVSHQEFSKMKQSNNEANLREEVLKNLATAYDNFVELVANLKEGTKFYNELTEILVRFQNKCSDIVFARKTERDELLKDLQQSIAREPSAPSIPPPAYQSSPAAGHAAAPPTPAPRTMPPAKPQPPARPPPPVLPANRVPPASAAAAPAGVGTASAAPPQTPGSAPPPQAQGPPYPTYPGYPGYCQMPMPMGYNPYAYGQYNMPYPPVYHQSPGQAPYPGPQQPTYPFPQPPQQSYYPQQ.

Residue A2 is modified to N-acetylalanine. The BRO1 domain occupies 3–392; that stretch reads SFIWVQLKKT…AQMREATTLA (390 aa). Residues 176-503 are interaction with CHMP4A, CHMP4B and CHMP4C; it reads TVDISPDTVG…KFRAVLDKAV (328 aa). N6-acetyllysine is present on K215. Positions 383 to 869 are interaction with SDCBP; it reads AQMREATTLA…PPQQSYYPQQ (487 aa). Phosphothreonine is present on T479. S481 is subject to Phosphoserine. The interval 503-869 is self-association; sequence VQADGQVKER…PPQQSYYPQQ (367 aa). Disordered regions lie at residues 715–808 and 838–869; these read REPS…PTYP and YHQS…YPQQ. Positions 717-720 are interaction with TSG101; it reads PSAP. Phosphoserine is present on S730. Pro residues predominate over residues 739–763; sequence PPTPAPRTMPPAKPQPPARPPPPVL. T741 is subject to Phosphothreonine. R745 is modified (omega-N-methylarginine). Positions 764–787 are enriched in low complexity; it reads PANRVPPASAAAAPAGVGTASAAP. Composition is skewed to pro residues over residues 788–808 and 845–861; these read PQTP…PTYP and APYP…PQPP. The interval 798–807 is interaction with CEP55; it reads QAQGPPYPTY.

In terms of assembly, self-associates. Interacts with SH3KBP1. Interacts with PDCD6 in a calcium-dependent manner. Interacts with TSG101 in a calcium-dependent manner; PDCD6IP homooligomerization may be required for TSG101-binding. Interacts with SGSM3. Directly interacts with CHMP4A, CHMP4B and CHMP4C. Directly interacts with CEP55 in a 1:2 stoechiometry; this interaction is required for PDCD6IP targeting to the midbody. May interact with PDGFRB. Interacts with SH3GL1 and SH3GL2/endophilin-1. Forms a complex with SDCBP and SDC2. Found in a complex with F-actin, TJP1/ZO-1 and PARD3. Interacts with CD2AP. Interacts with ARRDC1. Interacts (via BRO1 domain) with the ATG12-ATG3 conjugat; this interaction is bridged by ATG12 and promotes multiple PDCD6IP-mediated functions such as endolysosomal trafficking, macroautophagy and exosome biogenesis. In terms of processing, may be phosphorylated on tyrosine residues by activated PDGFRB. In terms of tissue distribution, ubiquitously expressed. High expression in choroid plexus and low expression in cerebral cortex (at protein level).

Its subcellular location is the cytoplasm. The protein localises to the cytosol. It is found in the melanosome. The protein resides in the cytoskeleton. It localises to the microtubule organizing center. Its subcellular location is the centrosome. The protein localises to the secreted. It is found in the extracellular exosome. The protein resides in the cell junction. It localises to the tight junction. Its subcellular location is the midbody. The protein localises to the midbody ring. Its function is as follows. Multifunctional protein involved in endocytosis, multivesicular body biogenesis, membrane repair, cytokinesis, apoptosis and maintenance of tight junction integrity. Class E VPS protein involved in concentration and sorting of cargo proteins of the multivesicular body (MVB) for incorporation into intralumenal vesicles (ILVs) that are generated by invagination and scission from the limiting membrane of the endosome. Binds to the phospholipid lysobisphosphatidic acid (LBPA) which is abundant in MVBs internal membranes. The MVB pathway requires the sequential function of ESCRT-O, -I,-II and -III complexes. The ESCRT machinery also functions in topologically equivalent membrane fission events, such as the terminal stages of cytokinesis. Adapter for a subset of ESCRT-III proteins, such as CHMP4, to function at distinct membranes. Required for completion of cytokinesis. May play a role in the regulation of both apoptosis and cell proliferation. Regulates exosome biogenesis in concert with SDC1/4 and SDCBP. By interacting with F-actin, PARD3 and TJP1 secures the proper assembly and positioning of actomyosin-tight junction complex at the apical sides of adjacent epithelial cells that defines a spatial membrane domain essential for the maintenance of epithelial cell polarity and barrier. This Mus musculus (Mouse) protein is Programmed cell death 6-interacting protein.